The chain runs to 750 residues: Sulfhydryl oxidase 1 (750 aa).

A signal peptide spans 1–32 (MRRCGRHSGPPSLLLLLLLLPPLLLSVPGAYA). Residues 33–159 (ARLSVLYSSS…RMRLIDALES (127 aa)) form the Thioredoxin domain. Active-site nucleophile residues include Cys-73 and Cys-76. Intrachain disulfides connect Cys-73/Cys-76 and Cys-104/Cys-113. N-linked (GlcNAc...) asparagine glycosylation is found at Asn-133 and Asn-246. A disulfide bond links Cys-396 and Cys-408. One can recognise an ERV/ALR sulfhydryl oxidase domain in the interval 399-506 (SEPHFRGFPC…EDPQFPKVQW (108 aa)). FAD-binding positions include Arg-404, Trp-411, His-415, Asp-454, His-458, 481–488 (WTSHNRVN), Lys-503, and Trp-506. Cys-452 and Cys-455 are oxidised to a cystine. A disulfide bridge links Cys-512 with Cys-515. Disordered regions lie at residues 545 to 567 (VRDPPAPGPASRRGTQDPEASPN) and 585 to 632 (EQAA…PEHT). A compositionally biased stretch (low complexity) spans 587–597 (AASAASPGATA). The helical transmembrane segment at 710–730 (FLDISLCVGLYSVSFMGLLAM) threads the bilayer.

It belongs to the quiescin-sulfhydryl oxidase (QSOX) family. In terms of assembly, monomer. The cofactor is FAD. In terms of processing, N-glycosylated. O-glycosylated on Thr and Ser residues. In terms of tissue distribution, isoform 3: Detected in seminal vesicle fluid (at protein level). Isoform 1: Detected in brain, hypophysis, heart, testis and the seminal vesicle. Isoform 3: Highly expressed in the seminal vesicles followed by testis, heart, brain, thymus, hypophysis and lung. Also expressed in prostate, kidney, spleen, liver.

The protein localises to the golgi apparatus membrane. Its subcellular location is the secreted. The catalysed reaction is 2 R'C(R)SH + O2 = R'C(R)S-S(R)CR' + H2O2. In terms of biological role, catalyzes the oxidation of sulfhydryl groups in peptide and protein thiols to disulfides with the reduction of oxygen to hydrogen peroxide. Plays a role in disulfide bond formation in a variety of extracellular proteins. In fibroblasts, required for normal incorporation of laminin into the extracellular matrix, and thereby for normal cell-cell adhesion and cell migration. The polypeptide is Sulfhydryl oxidase 1 (Qsox1) (Rattus norvegicus (Rat)).